A 1407-amino-acid chain; its full sequence is DNA-directed RNA polymerase subunit beta' (1407 aa).

The Zn(2+) site is built by Cys-70, Cys-72, Cys-85, and Cys-88. The Mg(2+) site is built by Asp-460, Asp-462, and Asp-464. Cys-814, Cys-888, Cys-895, and Cys-898 together coordinate Zn(2+). An N6-acetyllysine modification is found at Lys-972.

Belongs to the RNA polymerase beta' chain family. The RNAP catalytic core consists of 2 alpha, 1 beta, 1 beta' and 1 omega subunit. When a sigma factor is associated with the core the holoenzyme is formed, which can initiate transcription. It depends on Mg(2+) as a cofactor. Requires Zn(2+) as cofactor.

The catalysed reaction is RNA(n) + a ribonucleoside 5'-triphosphate = RNA(n+1) + diphosphate. DNA-dependent RNA polymerase catalyzes the transcription of DNA into RNA using the four ribonucleoside triphosphates as substrates. This Shigella sonnei (strain Ss046) protein is DNA-directed RNA polymerase subunit beta'.